We begin with the raw amino-acid sequence, 436 residues long: Trigger factor (436 aa).

The region spanning 162 to 247 (GDRVIIDFEG…LNNVSEATLP (86 aa)) is the PPIase FKBP-type domain.

Belongs to the FKBP-type PPIase family. Tig subfamily.

The protein resides in the cytoplasm. It catalyses the reaction [protein]-peptidylproline (omega=180) = [protein]-peptidylproline (omega=0). Its function is as follows. Involved in protein export. Acts as a chaperone by maintaining the newly synthesized protein in an open conformation. Functions as a peptidyl-prolyl cis-trans isomerase. This is Trigger factor from Neisseria meningitidis serogroup C (strain 053442).